We begin with the raw amino-acid sequence, 217 residues long: Large ribosomal subunit protein bL25 (217 aa).

Low complexity predominate over residues 195-211; that stretch reads PAEGAAAAPAKGAAKGA. A disordered region spans residues 195–217; sequence PAEGAAAAPAKGAAKGAAKGGKK.

This sequence belongs to the bacterial ribosomal protein bL25 family. CTC subfamily. As to quaternary structure, part of the 50S ribosomal subunit; part of the 5S rRNA/L5/L18/L25 subcomplex. Contacts the 5S rRNA. Binds to the 5S rRNA independently of L5 and L18.

In terms of biological role, this is one of the proteins that binds to the 5S RNA in the ribosome where it forms part of the central protuberance. The sequence is that of Large ribosomal subunit protein bL25 from Acidiphilium cryptum (strain JF-5).